The following is a 385-amino-acid chain: Exopolygalacturonase rpg16 (385 aa).

Positions Met-1 to Thr-26 are cleaved as a signal peptide. N-linked (GlcNAc...) asparagine glycans are attached at residues Asn-143, Asn-161, Asn-164, and Asn-180. Residues Ser-165–His-195 form a PbH1 1 repeat. The active-site Proton donor is the Asp-210. Cys-212 and Cys-229 are disulfide-bonded. 2 N-linked (GlcNAc...) asparagine glycosylation sites follow: Asn-218 and Asn-226. 3 PbH1 repeats span residues Val-219–Gly-241, Val-249–Thr-270, and Val-278–Thr-299. His-233 is a catalytic residue. Asn-256, Asn-282, and Asn-343 each carry an N-linked (GlcNAc...) asparagine glycan. Cys-344 and Cys-350 are joined by a disulfide. Residues Cys-350–Gly-376 form a PbH1 5 repeat. N-linked (GlcNAc...) asparagine glycans are attached at residues Asn-359 and Asn-365.

The protein belongs to the glycosyl hydrolase 28 family. N-glycosylated.

It localises to the secreted. It carries out the reaction [(1-&gt;4)-alpha-D-galacturonosyl](n) + H2O = alpha-D-galacturonate + [(1-&gt;4)-alpha-D-galacturonosyl](n-1). Specific in hydrolyzing the terminal glycosidic bond of polygalacturonic acid and oligogalacturonates. This chain is Exopolygalacturonase rpg16, found in Rhizopus delemar (strain RA 99-880 / ATCC MYA-4621 / FGSC 9543 / NRRL 43880) (Mucormycosis agent).